A 317-amino-acid chain; its full sequence is Acetyl-coenzyme A carboxylase carboxyl transferase subunit alpha (317 aa).

The CoA carboxyltransferase C-terminal domain occupies 40-293 (LEVRVREAIV…GDVIANALGE (254 aa)).

The protein belongs to the AccA family. As to quaternary structure, acetyl-CoA carboxylase is a heterohexamer composed of biotin carboxyl carrier protein (AccB), biotin carboxylase (AccC) and two subunits each of ACCase subunit alpha (AccA) and ACCase subunit beta (AccD).

It is found in the cytoplasm. The catalysed reaction is N(6)-carboxybiotinyl-L-lysyl-[protein] + acetyl-CoA = N(6)-biotinyl-L-lysyl-[protein] + malonyl-CoA. It participates in lipid metabolism; malonyl-CoA biosynthesis; malonyl-CoA from acetyl-CoA: step 1/1. In terms of biological role, component of the acetyl coenzyme A carboxylase (ACC) complex. First, biotin carboxylase catalyzes the carboxylation of biotin on its carrier protein (BCCP) and then the CO(2) group is transferred by the carboxyltransferase to acetyl-CoA to form malonyl-CoA. This is Acetyl-coenzyme A carboxylase carboxyl transferase subunit alpha from Rhizobium etli (strain ATCC 51251 / DSM 11541 / JCM 21823 / NBRC 15573 / CFN 42).